Here is a 170-residue protein sequence, read N- to C-terminus: Envelope protein 166 (170 aa).

Residue methionine 1 is a topological domain, intravirion. The chain crosses the membrane as a helical span at residues 2–22; the sequence is FYPVVQVLIGIILVIILILGF. The Virion surface segment spans residues 23–170; the sequence is YHMKHKPPKK…TVMGIARNVL (148 aa).

It belongs to the asfivirus envelope protein p22 family.

It is found in the virion membrane. It localises to the host cell membrane. This Ornithodoros (relapsing fever ticks) protein is Envelope protein 166.